We begin with the raw amino-acid sequence, 139 residues long: ATP synthase epsilon chain (139 aa).

This sequence belongs to the ATPase epsilon chain family. In terms of assembly, F-type ATPases have 2 components, CF(1) - the catalytic core - and CF(0) - the membrane proton channel. CF(1) has five subunits: alpha(3), beta(3), gamma(1), delta(1), epsilon(1). CF(0) has three main subunits: a, b and c.

It localises to the cell membrane. Functionally, produces ATP from ADP in the presence of a proton gradient across the membrane. The sequence is that of ATP synthase epsilon chain from Pediococcus pentosaceus (strain ATCC 25745 / CCUG 21536 / LMG 10740 / 183-1w).